Consider the following 218-residue polypeptide: Ribonuclease HII (218 aa).

The RNase H type-2 domain maps to 13-202; sequence DLVAGVDEVG…VRAAHEARAT (190 aa). Residues Asp-19, Glu-20, and Asp-111 each coordinate a divalent metal cation.

This sequence belongs to the RNase HII family. Mn(2+) serves as cofactor. Requires Mg(2+) as cofactor.

It is found in the cytoplasm. It carries out the reaction Endonucleolytic cleavage to 5'-phosphomonoester.. Its function is as follows. Endonuclease that specifically degrades the RNA of RNA-DNA hybrids. The chain is Ribonuclease HII from Pseudomonas syringae pv. syringae (strain B728a).